The chain runs to 245 residues: Collagen triple helix repeat-containing protein 1 (245 aa).

The signal sequence occupies residues 1–32 (MHPQGRAASPQLLLGLFLVLLLLLQLSAPSSA). Residues 59-92 (QGPAGVPGRDGSPGANGIPGTPGIPGRDGFKGEK) enclose the Collagen-like domain. The tract at residues 64–87 (VPGRDGSPGANGIPGTPGIPGRDG) is disordered. A glycan (N-linked (GlcNAc...) asparagine) is linked at Asn-188.

Post-translationally, N-glycosylated. In terms of tissue distribution, expressed after injury in the carotid arteries (at protein level). Expressed in brain, lung, and after injury in fibroblasts of the adventitia and the neointima of the arteries.

It is found in the secreted. Its subcellular location is the extracellular space. The protein localises to the extracellular matrix. Its overexpression in smooth muscle cell lines increases their migratory ability and inhibits collagen type I expression. May act as a negative regulator of collagen matrix deposition. This is Collagen triple helix repeat-containing protein 1 (Cthrc1) from Rattus norvegicus (Rat).